A 396-amino-acid polypeptide reads, in one-letter code: Proteinase-activated receptor 4 (396 aa).

An N-terminal signal peptide occupies residues 1-16 (MCWPLLYPLVLGLSIS). Residues 17-59 (LAEGIQTPSIYDDVESTRGSHEGPLGPTVELKEPKSSDKPNPR) constitute a propeptide, removed for receptor activation. Residues 28–62 (DDVESTRGSHEGPLGPTVELKEPKSSDKPNPRGYP) are disordered. Residues 46–57 (ELKEPKSSDKPN) show a composition bias toward basic and acidic residues. At 60-94 (GYPGKFCANDSDTLELPASSQALLLGWVPTRLVPA) the chain is on the extracellular side. N68 carries an N-linked (GlcNAc...) asparagine glycan. The chain crosses the membrane as a helical span at residues 95-115 (LYGLVVAVGLPANGLALWVLA). The Cytoplasmic portion of the chain corresponds to 116 to 120 (TRVPR). The helical transmembrane segment at 121–141 (LPSTILLMNLAVADLLLALVL) threads the bilayer. Residues 142–162 (PPRLAYHLRGQRWPFGEAACR) lie on the Extracellular side of the membrane. C161 and C240 form a disulfide bridge. Residues 163–183 (VATAALYGHMYGSVLLLAAVS) form a helical membrane-spanning segment. Over 184–203 (LDRYLALVHPLRARALRGQR) the chain is Cytoplasmic. The helical transmembrane segment at 204–224 (LTTGLCLVAWLSAATLALPLT) threads the bilayer. Residues 225-255 (LHRQTFRLAGSDRMLCHDALPLTEQTSHWRP) lie on the Extracellular side of the membrane. Residues 256–276 (AFICLAVLGCFVPLLAMGLCY) form a helical membrane-spanning segment. Residues 277–295 (GATLRALAANGQRYSHALR) lie on the Cytoplasmic side of the membrane. Residues 296–316 (LTALVLFSAVASFTPSNVLLV) form a helical membrane-spanning segment. At 317-331 (LHYSNPSPEAWGNLY) the chain is on the extracellular side. Residues 332-355 (GAYVPSLALSTLNSCVDPFIYYYV) traverse the membrane as a helical segment. Residues 356-396 (SHEFREKVRAMLCRQPEASSSSQASREAGSRGTAICSSTLL) lie on the Cytoplasmic side of the membrane.

Belongs to the G-protein coupled receptor 1 family. A proteolytic cleavage generates a new N-terminus that functions as a tethered ligand. In terms of tissue distribution, highly expressed in the spleen. Slight expression in the heart, lung, skeletal muscle and kidney. No detectable expression in brain, liver or testis. Also detected in platelets.

The protein resides in the cell membrane. In terms of biological role, receptor for activated thrombin or trypsin coupled to G proteins that stimulate phosphoinositide hydrolysis. May play a role in platelets activation. The protein is Proteinase-activated receptor 4 (F2rl3) of Mus musculus (Mouse).